The primary structure comprises 303 residues: Pseudouridine-5'-phosphate glycosidase (303 aa).

Glutamate 25 serves as the catalytic Proton donor. Substrate contacts are provided by lysine 87 and valine 107. A Mn(2+)-binding site is contributed by aspartate 139. 141-143 contributes to the substrate binding site; it reads SAD. Catalysis depends on lysine 160, which acts as the Nucleophile.

It belongs to the pseudouridine-5'-phosphate glycosidase family. As to quaternary structure, homotrimer. The cofactor is Mn(2+).

The catalysed reaction is D-ribose 5-phosphate + uracil = psi-UMP + H2O. In terms of biological role, catalyzes the reversible cleavage of pseudouridine 5'-phosphate (PsiMP) to ribose 5-phosphate and uracil. Functions biologically in the cleavage direction, as part of a pseudouridine degradation pathway. The sequence is that of Pseudouridine-5'-phosphate glycosidase from Hahella chejuensis (strain KCTC 2396).